We begin with the raw amino-acid sequence, 300 residues long: Epimerase family protein SACOL0834 (300 aa).

It belongs to the NAD(P)-dependent epimerase/dehydratase family. SDR39U1 subfamily.

This is Epimerase family protein SACOL0834 from Staphylococcus aureus (strain COL).